A 545-amino-acid chain; its full sequence is Methionine--tRNA ligase (545 aa).

The short motif at 13-23 (PYANGPLHIGH) is the 'HIGH' region element. The Zn(2+) site is built by C144, C147, C157, and C160. The 'KMSKS' region motif lies at 330–334 (KISKS). K333 provides a ligand contact to ATP.

It belongs to the class-I aminoacyl-tRNA synthetase family. MetG type 1 subfamily. Monomer. The cofactor is Zn(2+).

Its subcellular location is the cytoplasm. The catalysed reaction is tRNA(Met) + L-methionine + ATP = L-methionyl-tRNA(Met) + AMP + diphosphate. Its function is as follows. Is required not only for elongation of protein synthesis but also for the initiation of all mRNA translation through initiator tRNA(fMet) aminoacylation. The polypeptide is Methionine--tRNA ligase (Blochmanniella floridana).